We begin with the raw amino-acid sequence, 226 residues long: Cytidylate kinase (226 aa).

Position 10–18 (10–18) interacts with ATP; that stretch reads GPASSGKST.

The protein belongs to the cytidylate kinase family. Type 1 subfamily.

The protein resides in the cytoplasm. The enzyme catalyses CMP + ATP = CDP + ADP. It catalyses the reaction dCMP + ATP = dCDP + ADP. The protein is Cytidylate kinase of Streptococcus pyogenes serotype M1.